The chain runs to 695 residues: UvrABC system protein B (695 aa).

Positions 31 to 414 (EGIESGLSFQ…EIQRSGQIAE (384 aa)) constitute a Helicase ATP-binding domain. ATP is bound at residue 44 to 51 (GVTGSGKT). Positions 97–120 (YYDYYQPEAYVPSRDLFIEKDSSI) match the Beta-hairpin motif. The Helicase C-terminal domain occupies 435–601 (QVDDLMSEVS…GVNKRIKDLI (167 aa)). The region spanning 632-667 (AKEIQRLEKSMLEAARNMEFEQAAQYRDEIKNLRSK) is the UVR domain.

The protein belongs to the UvrB family. In terms of assembly, forms a heterotetramer with UvrA during the search for lesions. Interacts with UvrC in an incision complex.

The protein resides in the cytoplasm. In terms of biological role, the UvrABC repair system catalyzes the recognition and processing of DNA lesions. A damage recognition complex composed of 2 UvrA and 2 UvrB subunits scans DNA for abnormalities. Upon binding of the UvrA(2)B(2) complex to a putative damaged site, the DNA wraps around one UvrB monomer. DNA wrap is dependent on ATP binding by UvrB and probably causes local melting of the DNA helix, facilitating insertion of UvrB beta-hairpin between the DNA strands. Then UvrB probes one DNA strand for the presence of a lesion. If a lesion is found the UvrA subunits dissociate and the UvrB-DNA preincision complex is formed. This complex is subsequently bound by UvrC and the second UvrB is released. If no lesion is found, the DNA wraps around the other UvrB subunit that will check the other stand for damage. The sequence is that of UvrABC system protein B from Nitrosomonas europaea (strain ATCC 19718 / CIP 103999 / KCTC 2705 / NBRC 14298).